A 273-amino-acid polypeptide reads, in one-letter code: Dermonecrotic toxin LdSicTox-alphaIB3av (273 aa).

Residue His-5 is part of the active site. Mg(2+) contacts are provided by Glu-25 and Asp-27. The Nucleophile role is filled by His-41. 2 cysteine pairs are disulfide-bonded: Cys-45–Cys-51 and Cys-47–Cys-190. Residue Asp-85 coordinates Mg(2+).

This sequence belongs to the arthropod phospholipase D family. Class II subfamily. Mg(2+) is required as a cofactor. In terms of tissue distribution, expressed by the venom gland.

It is found in the secreted. It catalyses the reaction an N-(acyl)-sphingosylphosphocholine = an N-(acyl)-sphingosyl-1,3-cyclic phosphate + choline. The catalysed reaction is an N-(acyl)-sphingosylphosphoethanolamine = an N-(acyl)-sphingosyl-1,3-cyclic phosphate + ethanolamine. The enzyme catalyses a 1-acyl-sn-glycero-3-phosphocholine = a 1-acyl-sn-glycero-2,3-cyclic phosphate + choline. It carries out the reaction a 1-acyl-sn-glycero-3-phosphoethanolamine = a 1-acyl-sn-glycero-2,3-cyclic phosphate + ethanolamine. Dermonecrotic toxins cleave the phosphodiester linkage between the phosphate and headgroup of certain phospholipids (sphingolipid and lysolipid substrates), forming an alcohol (often choline) and a cyclic phosphate. This toxin acts on sphingomyelin (SM). It may also act on ceramide phosphoethanolamine (CPE), lysophosphatidylcholine (LPC) and lysophosphatidylethanolamine (LPE), but not on lysophosphatidylserine (LPS), and lysophosphatidylglycerol (LPG). It acts by transphosphatidylation, releasing exclusively cyclic phosphate products as second products. Induces dermonecrosis, hemolysis, increased vascular permeability, edema, inflammatory response, and platelet aggregation. The sequence is that of Dermonecrotic toxin LdSicTox-alphaIB3av from Loxosceles deserta (Desert recluse spider).